The following is a 449-amino-acid chain: Glucose-6-phosphate isomerase (449 aa).

The Proton donor role is filled by Glu-290. Catalysis depends on residues His-311 and Lys-425.

This sequence belongs to the GPI family.

It localises to the cytoplasm. The enzyme catalyses alpha-D-glucose 6-phosphate = beta-D-fructose 6-phosphate. It functions in the pathway carbohydrate biosynthesis; gluconeogenesis. The protein operates within carbohydrate degradation; glycolysis; D-glyceraldehyde 3-phosphate and glycerone phosphate from D-glucose: step 2/4. In terms of biological role, catalyzes the reversible isomerization of glucose-6-phosphate to fructose-6-phosphate. The polypeptide is Glucose-6-phosphate isomerase (Exiguobacterium sibiricum (strain DSM 17290 / CCUG 55495 / CIP 109462 / JCM 13490 / 255-15)).